The sequence spans 314 residues: Vomeronasal type-1 receptor 98 (314 aa).

The Extracellular portion of the chain corresponds to 1 to 19 (MNKDTTMYCSAYIRDVFFC). Residues 20–40 (EIGVGISANSCLLLFHIFMFI) form a helical membrane-spanning segment. The Cytoplasmic portion of the chain corresponds to 41-49 (RGHRPRLTD). Residues 50-70 (LPIGLMALIHLLMLLLAAYIA) traverse the membrane as a helical segment. The Extracellular segment spans residues 71–92 (KDFFMSSGWDDITCKLFIFLHR). Cys84 and Cys171 are joined by a disulfide. Residues 93–113 (FFRSLSVCATCMLSVFQTIIL) traverse the membrane as a helical segment. Residues 114-133 (CPQSSHLAKFKPNSPYHLSC) are Cytoplasmic-facing. The chain crosses the membrane as a helical span at residues 134–154 (FFIFMSIFYTSISSHILIAAI). At 155–186 (ATQNLTSVNLIYITKSCSFLPMSSSMQRTFST) the chain is on the extracellular side. N-linked (GlcNAc...) asparagine glycosylation is present at Asn158. The chain crosses the membrane as a helical span at residues 187–207 (LLAFRNAFLIGLMGLSTCYMA). Topologically, residues 208–235 (TLLCRHKTRSQRLQNSKLSPKATPEQRA) are cytoplasmic. A helical transmembrane segment spans residues 236–256 (IWTLLMFMSFFLVMSTFDSII). The Extracellular portion of the chain corresponds to 257-268 (SYSRTIFQGNPS). Residues 269–289 (LYCAQILVAHSYAVVSPMLVL) traverse the membrane as a helical segment. Residues 290 to 314 (SNENRLTNPLISMYERIVRLDFLCW) are Cytoplasmic-facing.

This sequence belongs to the G-protein coupled receptor 1 family.

It is found in the cell membrane. Functionally, putative pheromone receptor implicated in the regulation of social as well as reproductive behavior. In Rattus norvegicus (Rat), this protein is Vomeronasal type-1 receptor 98 (Vom1r98).